The following is a 178-amino-acid chain: Peptide deformylase (178 aa).

Fe cation is bound by residues Cys-102 and His-144. The active site involves Glu-145. His-148 provides a ligand contact to Fe cation.

The protein belongs to the polypeptide deformylase family. Requires Fe(2+) as cofactor.

The enzyme catalyses N-terminal N-formyl-L-methionyl-[peptide] + H2O = N-terminal L-methionyl-[peptide] + formate. Its function is as follows. Removes the formyl group from the N-terminal Met of newly synthesized proteins. Requires at least a dipeptide for an efficient rate of reaction. N-terminal L-methionine is a prerequisite for activity but the enzyme has broad specificity at other positions. This is Peptide deformylase from Leptospira borgpetersenii serovar Hardjo-bovis (strain JB197).